A 312-amino-acid chain; its full sequence is Porphobilinogen deaminase (312 aa).

Position 241 is an S-(dipyrrolylmethanemethyl)cysteine (C241).

The protein belongs to the HMBS family. As to quaternary structure, monomer. The cofactor is dipyrromethane.

It carries out the reaction 4 porphobilinogen + H2O = hydroxymethylbilane + 4 NH4(+). The protein operates within porphyrin-containing compound metabolism; protoporphyrin-IX biosynthesis; coproporphyrinogen-III from 5-aminolevulinate: step 2/4. It functions in the pathway porphyrin-containing compound metabolism; chlorophyll biosynthesis. Its function is as follows. Tetrapolymerization of the monopyrrole PBG into the hydroxymethylbilane pre-uroporphyrinogen in several discrete steps. The chain is Porphobilinogen deaminase (hemC) from Chlorobaculum parvum (strain DSM 263 / NCIMB 8327) (Chlorobium vibrioforme subsp. thiosulfatophilum).